We begin with the raw amino-acid sequence, 250 residues long: Glutamate racemase (250 aa).

Substrate contacts are provided by residues 7 to 8 and 39 to 40; these read DS and YG. C70 acts as the Proton donor/acceptor in catalysis. Substrate is bound at residue 71 to 72; sequence NT. Catalysis depends on C180, which acts as the Proton donor/acceptor. 181–182 serves as a coordination point for substrate; it reads TH.

Belongs to the aspartate/glutamate racemases family.

It carries out the reaction L-glutamate = D-glutamate. Its pathway is cell wall biogenesis; peptidoglycan biosynthesis. Functionally, provides the (R)-glutamate required for cell wall biosynthesis. This chain is Glutamate racemase, found in Campylobacter jejuni subsp. jejuni serotype O:2 (strain ATCC 700819 / NCTC 11168).